The sequence spans 141 residues: Hemoglobin subunit alpha (141 aa).

One can recognise a Globin domain in the interval 1–141; the sequence is VLSPEDKNHV…VSTVLTSKYR (141 aa). Phosphoserine is present on Ser3. Lys7 is modified (N6-succinyllysine). At Lys16 the chain carries N6-acetyllysine; alternate. At Lys16 the chain carries N6-succinyllysine; alternate. At Tyr24 the chain carries Phosphotyrosine. Ser35 carries the post-translational modification Phosphoserine. An N6-succinyllysine modification is found at Lys40. A Phosphoserine modification is found at Ser49. Residue His58 participates in O2 binding. Heme b is bound at residue His87. Residue Ser102 is modified to Phosphoserine. Residue Thr108 is modified to Phosphothreonine. Phosphoserine is present on residues Ser124 and Ser131. Thr134 and Thr137 each carry phosphothreonine. Ser138 carries the post-translational modification Phosphoserine.

This sequence belongs to the globin family. As to quaternary structure, heterotetramer of two alpha chains and two beta chains. Red blood cells.

Involved in oxygen transport from the lung to the various peripheral tissues. Functionally, hemopressin acts as an antagonist peptide of the cannabinoid receptor CNR1. Hemopressin-binding efficiently blocks cannabinoid receptor CNR1 and subsequent signaling. The chain is Hemoglobin subunit alpha (HBA) from Spalax ehrenbergi (Middle East blind mole rat).